The sequence spans 315 residues: Calcium homeostasis modulator protein 6 (315 aa).

Residues 1-21 (MEKFRAVLDLHVKHHSALGYG) are Cytoplasmic-facing. A helical transmembrane segment spans residues 22-37 (LVTLLTAGGERIFSAV). At 38–46 (AFQCPCSAA) the chain is on the extracellular side. 3 cysteine pairs are disulfide-bonded: cysteine 41–cysteine 126, cysteine 43–cysteine 155, and cysteine 139–cysteine 146. Residues 47 to 68 (WNLPYGLVFLLVPALALFLLGY) form a helical membrane-spanning segment. Residues 69-102 (VLSARTWRLLTGCCSSARASCGSALRGSLVCTQI) lie on the Cytoplasmic side of the membrane. The helical transmembrane segment at 103 to 127 (SAAAALAPLTWVAVALLGGAFYECA) threads the bilayer. The Extracellular portion of the chain corresponds to 128 to 169 (ATGSAAFAQRLCLGRNRSCAAELPLVPCNQAKASDVQDLLKD). The helical transmembrane segment at 170–192 (LKAQSQVLGWILIAVVIIILLIF) threads the bilayer. Topologically, residues 193–315 (TSVTRCLSPV…SSGINSTPEL (123 aa)) are cytoplasmic.

It belongs to the CALHM family. In terms of assembly, oligomerizes to form decameric and undecameric channels. N-glycosylated. As to expression, placenta.

The protein resides in the cell membrane. It catalyses the reaction ATP(in) = ATP(out). In terms of biological role, pore-forming subunit of an ATP-permeable channel. In response to pathogen-derived and proinflammatory stimuli, relocates from intracellular compartments to NK-dendritic cell and NK-macrophage immune synapses where it mediates ATP efflux and NK cell activation involved in antimicrobial and antitumor responses. May assemble to form gap junction channel-like structures with gating and ion conductance likely regulated by membrane lipids and voltage rather than by extracellular calcium levels. This Homo sapiens (Human) protein is Calcium homeostasis modulator protein 6.